Reading from the N-terminus, the 625-residue chain is tRNA uridine 5-carboxymethylaminomethyl modification enzyme MnmG (625 aa).

FAD-binding positions include 13–18, Val125, and Ser182; that span reads GGGHAG. 276–290 serves as a coordination point for NAD(+); sequence GPRYCPSIEDKITRF. Gln373 serves as a coordination point for FAD.

It belongs to the MnmG family. In terms of assembly, homodimer. Heterotetramer of two MnmE and two MnmG subunits. FAD serves as cofactor.

Its subcellular location is the cytoplasm. Functionally, NAD-binding protein involved in the addition of a carboxymethylaminomethyl (cmnm) group at the wobble position (U34) of certain tRNAs, forming tRNA-cmnm(5)s(2)U34. This Lactococcus lactis subsp. cremoris (strain MG1363) protein is tRNA uridine 5-carboxymethylaminomethyl modification enzyme MnmG.